Consider the following 330-residue polypeptide: Succinoglycan biosynthesis protein ExoA (330 aa).

Transmembrane regions (helical) follow at residues 116–136, 260–280, and 299–319; these read ALATGADSVVVAMQTVGFSTF, IAFGALLAIVNWMAVVPVGVW, and YGPLAAVAAMVMHLAWSAGFW.

It belongs to the glycosyltransferase 2 family.

It localises to the cell membrane. It participates in glycan metabolism; exopolysaccharide biosynthesis. Functionally, glycosyltransferase required for the synthesis of succinoglycan (EPS I). Needed for the addition of the second sugar (glucose). Catalyzes the formation of a beta-1,3 linkage with the galactose lipid carrier. In Rhizobium meliloti (strain 1021) (Ensifer meliloti), this protein is Succinoglycan biosynthesis protein ExoA (exoA).